The following is a 96-amino-acid chain: Neutrophil defensin 3 (96 aa).

The signal sequence occupies residues 1–19 (MRTLVILAAILLVALQAQA). The propeptide occupies 20 to 66 (EPLQARTDEATAAQEQIPTDNPEVVVSLAWDESLAPKDSVPGLRKNM). 3 disulfides stabilise this stretch: Cys68–Cys96, Cys70–Cys85, and Cys75–Cys95.

It is found in the secreted. In terms of biological role, has bacteriostatic activity against Gram-positive bacteria S.aureus and L.monocytogenes and Gram-negative bacterium E.coli and antifungal activity against C.neoformans. This is Neutrophil defensin 3 from Macaca mulatta (Rhesus macaque).